Reading from the N-terminus, the 349-residue chain is Holliday junction branch migration complex subunit RuvB (349 aa).

The segment at 1–181 (MDDRILTSVN…FGVLCPMEFY (181 aa)) is large ATPase domain (RuvB-L). ATP-binding positions include L20, R21, G62, K65, T66, T67, 128–130 (EDY), R171, Y181, and R218. T66 is a binding site for Mg(2+). Positions 182–252 (NDEELKEIIV…SAKKALNLLE (71 aa)) are small ATPAse domain (RuvB-S). A head domain (RuvB-H) region spans residues 255–349 (DEGFDSIDNK…DQCSFFKKEK (95 aa)). DNA is bound by residues R310 and R315.

Belongs to the RuvB family. As to quaternary structure, homohexamer. Forms an RuvA(8)-RuvB(12)-Holliday junction (HJ) complex. HJ DNA is sandwiched between 2 RuvA tetramers; dsDNA enters through RuvA and exits via RuvB. An RuvB hexamer assembles on each DNA strand where it exits the tetramer. Each RuvB hexamer is contacted by two RuvA subunits (via domain III) on 2 adjacent RuvB subunits; this complex drives branch migration. In the full resolvosome a probable DNA-RuvA(4)-RuvB(12)-RuvC(2) complex forms which resolves the HJ.

The protein resides in the cytoplasm. The enzyme catalyses ATP + H2O = ADP + phosphate + H(+). Its function is as follows. The RuvA-RuvB-RuvC complex processes Holliday junction (HJ) DNA during genetic recombination and DNA repair, while the RuvA-RuvB complex plays an important role in the rescue of blocked DNA replication forks via replication fork reversal (RFR). RuvA specifically binds to HJ cruciform DNA, conferring on it an open structure. The RuvB hexamer acts as an ATP-dependent pump, pulling dsDNA into and through the RuvAB complex. RuvB forms 2 homohexamers on either side of HJ DNA bound by 1 or 2 RuvA tetramers; 4 subunits per hexamer contact DNA at a time. Coordinated motions by a converter formed by DNA-disengaged RuvB subunits stimulates ATP hydrolysis and nucleotide exchange. Immobilization of the converter enables RuvB to convert the ATP-contained energy into a lever motion, pulling 2 nucleotides of DNA out of the RuvA tetramer per ATP hydrolyzed, thus driving DNA branch migration. The RuvB motors rotate together with the DNA substrate, which together with the progressing nucleotide cycle form the mechanistic basis for DNA recombination by continuous HJ branch migration. Branch migration allows RuvC to scan DNA until it finds its consensus sequence, where it cleaves and resolves cruciform DNA. This is Holliday junction branch migration complex subunit RuvB from Clostridium acetobutylicum (strain ATCC 824 / DSM 792 / JCM 1419 / IAM 19013 / LMG 5710 / NBRC 13948 / NRRL B-527 / VKM B-1787 / 2291 / W).